The following is a 185-amino-acid chain: DNA-directed RNA polymerase 21 kDa subunit (185 aa).

The protein belongs to the poxviridae DNA-directed RNA polymerase 22 kDa subunit family. In terms of assembly, the DNA-dependent RNA polymerase used for intermediate and late genes expression consists of eight subunits Rpo30/OPG66, Rpo7/OPG90, Rpo22/OPG103, Rpo147/OPG105, Rpo18/OPG119, Rpo19/OPG131, Rpo132/OPG151 and Rpo35/OPG156. The same holoenzyme, with the addition of the transcription-specificity factor OPG109, is used for early gene expression.

It localises to the virion. It carries out the reaction RNA(n) + a ribonucleoside 5'-triphosphate = RNA(n+1) + diphosphate. Part of the DNA-dependent RNA polymerase which catalyzes the transcription of viral DNA into RNA using the four ribonucleoside triphosphates as substrates. Responsible for the transcription of early, intermediate and late genes. DNA-dependent RNA polymerase associates with the early transcription factor (ETF), itself composed of OPG118 and OPG133, thereby allowing the early genes transcription. Late transcription, and probably also intermediate transcription, require newly synthesized RNA polymerase. In Oryctolagus cuniculus (Rabbit), this protein is DNA-directed RNA polymerase 21 kDa subunit (OPG103).